The primary structure comprises 232 residues: Ubiquinone biosynthesis O-methyltransferase (232 aa).

4 residues coordinate S-adenosyl-L-methionine: Arg-36, Gly-55, Asp-76, and Leu-120.

This sequence belongs to the methyltransferase superfamily. UbiG/COQ3 family.

The enzyme catalyses a 3-demethylubiquinol + S-adenosyl-L-methionine = a ubiquinol + S-adenosyl-L-homocysteine + H(+). It catalyses the reaction a 3-(all-trans-polyprenyl)benzene-1,2-diol + S-adenosyl-L-methionine = a 2-methoxy-6-(all-trans-polyprenyl)phenol + S-adenosyl-L-homocysteine + H(+). It functions in the pathway cofactor biosynthesis; ubiquinone biosynthesis. Its function is as follows. O-methyltransferase that catalyzes the 2 O-methylation steps in the ubiquinone biosynthetic pathway. The sequence is that of Ubiquinone biosynthesis O-methyltransferase from Pseudomonas aeruginosa (strain UCBPP-PA14).